We begin with the raw amino-acid sequence, 420 residues long: Glucose-1-phosphate adenylyltransferase 2 (420 aa).

Alpha-D-glucose 1-phosphate is bound by residues Tyr-109, Gly-175, 190–191 (EK), and Ser-208.

Belongs to the bacterial/plant glucose-1-phosphate adenylyltransferase family. In terms of assembly, homotetramer.

The enzyme catalyses alpha-D-glucose 1-phosphate + ATP + H(+) = ADP-alpha-D-glucose + diphosphate. The protein operates within glycan biosynthesis; glycogen biosynthesis. Functionally, involved in the biosynthesis of ADP-glucose, a building block required for the elongation reactions to produce glycogen. Catalyzes the reaction between ATP and alpha-D-glucose 1-phosphate (G1P) to produce pyrophosphate and ADP-Glc. This chain is Glucose-1-phosphate adenylyltransferase 2, found in Pseudoalteromonas atlantica (strain T6c / ATCC BAA-1087).